A 215-amino-acid polypeptide reads, in one-letter code: MADSSPALSLREGGPRAPRPSAPSPPPRSRSGSESEEAELSLSLARTKTRSYGSTASVRAPLGAGVIERHVEHRVRAGDTLQGIALKYGVTMEQIKRANKLFTNDCIFLKKTLNIPVISEKPLLFNGLNSIDSPENETADNSFSQEEEPVVAGEDLPPPSPQESDVQPVQPEEVSARDFLQRLDLQIKLSTQAAKKLKEESRDEESPYATSLYHS.

Residues 1–40 (MADSSPALSLREGGPRAPRPSAPSPPPRSRSGSESEEAEL) form a disordered region. An N-acetylalanine modification is found at alanine 2. A phosphoserine mark is found at serine 5, serine 24, serine 33, and serine 57. A compositionally biased stretch (pro residues) spans 17 to 28 (APRPSAPSPPPR). The LysM domain maps to 71–115 (VEHRVRAGDTLQGIALKYGVTMEQIKRANKLFTNDCIFLKKTLNI). Disordered stretches follow at residues 132 to 175 (DSPE…EEVS) and 193 to 215 (AAKK…LYHS). Positions 196 to 205 (KLKEESRDEE) are enriched in basic and acidic residues.

The protein is LysM and putative peptidoglycan-binding domain-containing protein 2 (LYSMD2) of Homo sapiens (Human).